Consider the following 213-residue polypeptide: Ras-related protein Rab-4A (213 aa).

The GTP site is built by Gly-18, Thr-19, Gly-20, Lys-21, Ser-22, Cys-23, Ser-37, His-39, and Thr-40. Position 22 (Ser-22) interacts with Mg(2+). The Switch 1 signature appears at 39 to 44 (HTIGVE). Positions 40 and 63 each coordinate Mg(2+). The Switch 2 motif lies at 65-74 (AGQERFRSVT). The GTP site is built by Gly-66, Asn-121, Lys-122, Asp-124, Ala-152, and Leu-153. Residues Cys-211 and Cys-213 are each lipidated (S-geranylgeranyl cysteine). Cys-213 is modified (cysteine methyl ester).

Belongs to the small GTPase superfamily. Rab family. It depends on Mg(2+) as a cofactor.

Its subcellular location is the membrane. It is found in the cytoplasm. The protein resides in the early endosome membrane. The protein localises to the recycling endosome membrane. The catalysed reaction is GTP + H2O = GDP + phosphate + H(+). Its activity is regulated as follows. Regulated by guanine nucleotide exchange factors (GEFs) which promote the exchange of bound GDP for free GTP. Regulated by GTPase activating proteins (GAPs) which increase the GTP hydrolysis activity. Inhibited by GDP dissociation inhibitors (GDIs). Functionally, the small GTPases Rab are key regulators of intracellular membrane trafficking, from the formation of transport vesicles to their fusion with membranes. Rabs cycle between an inactive GDP-bound form and an active GTP-bound form that is able to recruit to membranes different sets of downstream effectors directly responsible for vesicle formation, movement, tethering and fusion. RAB4A is involved in protein transport. Also plays a role in vesicular traffic. Mediates VEGFR2 endosomal trafficking to enhance VEGFR2 signaling. Acts as a regulator of platelet alpha-granule release during activation and aggregation of platelets. The chain is Ras-related protein Rab-4A (rab4a) from Danio rerio (Zebrafish).